The following is a 1827-amino-acid chain: Phenolphthiocerol/phthiocerol polyketide synthase subunit C (1827 aa).

Residues 35–461 enclose the Ketosynthase family 3 (KS3) domain; it reads CEPVAVVGIG…GTNAHVVVEQ (427 aa). Catalysis depends on for beta-ketoacyl synthase activity residues Cys-207, His-342, and His-383. Residues 566 to 876 form an acyltransferase region; the sequence is VFVYSGQGSQ…LAAVGVAASE (311 aa). The For malonyltransferase activity role is filled by Ser-654. The tract at residues 910 to 1037 is N-terminal hotdog fold; the sequence is HPLLGAHIEM…AKVEQSPREC (128 aa). The tract at residues 910-1076 is dehydratase; sequence HPLLGAHIEM…QHHGPAFAAL (167 aa). In terms of domain architecture, PKS/mFAS DH spans 910 to 1198; that stretch reads HPLLGAHIEM…LRRVERRAVP (289 aa). The Proton acceptor; for dehydratase activity role is filled by His-942. Residues 1050-1198 are C-terminal hotdog fold; that stretch reads GTTVSPADFY…LRRVERRAVP (149 aa). Residue Asp-1111 is the Proton donor; for dehydratase activity of the active site. Residues 1439–1617 form a beta-ketoacyl reductase region; that stretch reads ASYVVTGGLG…VINWGPWSEV (179 aa). 1440 to 1485 lines the NADP(+) pocket; the sequence is SYVVTGGLGGLGLVVARWLVDRGAGRVVLGGRSDPTDEQCNVLAEL. The Carrier domain maps to 1706-1785; sequence RAVTERMCAR…DLTADLMRQL (80 aa). Ser-1745 carries the post-translational modification O-(pantetheine 4'-phosphoryl)serine. Residues 1807-1820 show a composition bias toward basic residues; it reads RAAARHGAAMRRRP. The interval 1807–1827 is disordered; that stretch reads RAAARHGAAMRRRPKPEVQGG.

Requires NADP(+) as cofactor. Pantetheine 4'-phosphate serves as cofactor.

The catalysed reaction is icosanoyl-[(phenol)carboxyphthiodiolenone synthase] + 2 (S)-methylmalonyl-CoA + 3 malonyl-CoA + 5 NADPH + 10 H(+) = C32-carboxyphthiodiolenone-[(phenol)carboxyphthiodiolenone synthase] + 5 CO2 + 5 NADP(+) + 5 CoA + 2 H2O. It catalyses the reaction docosanoyl-[(phenol)carboxyphthiodiolenone synthase] + 2 (S)-methylmalonyl-CoA + 3 malonyl-CoA + 5 NADPH + 10 H(+) = C34-carboxyphthiodiolenone-[(phenol)carboxyphthiodiolenone synthase] + 5 CO2 + 5 NADP(+) + 5 CoA + 2 H2O. The enzyme catalyses 17-(4-hydroxyphenyl)heptadecanoyl-[(phenol)carboxyphthiodiolenone synthase] + 2 (S)-methylmalonyl-CoA + 3 malonyl-CoA + 5 NADPH + 10 H(+) = C35-(phenol)carboxyphthiodiolenone-[(phenol)carboxyphthiodiolenone synthase] + 5 CO2 + 5 NADP(+) + 5 CoA + 2 H2O. It carries out the reaction 19-(4-hydroxyphenyl)nonadecanoyl-[(phenol)carboxyphthiodiolenone synthase] + 2 (S)-methylmalonyl-CoA + 3 malonyl-CoA + 5 NADPH + 10 H(+) = C37-(phenol)carboxyphthiodiolenone-[(phenol)carboxyphthiodiolenone synthase] + 5 CO2 + 5 NADP(+) + 5 CoA + 2 H2O. It functions in the pathway lipid metabolism; fatty acid biosynthesis. Part of the PpsABCDE complex involved in the biosynthesis of the lipid core common to phthiocerols and phenolphthiocerols by successive additions of malonyl-CoA or methylmalonyl-CoA extender units. PpsA can accept as substrate the activated forms of either icosanoyl (C20), docosanoyl (C22) or lignoceroyl (C24) groups from FadD26, or a (4-hydroxyphenyl)-C17 or (4-hydroxyphenyl)-C19 fatty acyl from FadD29. PpsA initiates the biosynthesis and extends its substrate using a malonyl-CoA extender unit. The PpsB and PpsC proteins add the second and third malonyl-CoA extender units. PpsD adds an (R)-methylmalonyl unit and PpsE adds a second (R)-methylmalonyl unit. The incorporation of the methylmalonyl units results in formation of two branched methyl groups in the elongated product. This Mycobacterium tuberculosis (strain CDC 1551 / Oshkosh) protein is Phenolphthiocerol/phthiocerol polyketide synthase subunit C (ppsD).